Reading from the N-terminus, the 455-residue chain is Glutamate--tRNA ligase (455 aa).

The 'HIGH' region motif lies at 8 to 18 (PSPTGYLHIGG). A 'KMSKS' region motif is present at residues 231-235 (RLSKR). ATP is bound at residue lysine 234.

It belongs to the class-I aminoacyl-tRNA synthetase family. Glutamate--tRNA ligase type 1 subfamily. In terms of assembly, monomer.

It is found in the cytoplasm. It carries out the reaction tRNA(Glu) + L-glutamate + ATP = L-glutamyl-tRNA(Glu) + AMP + diphosphate. Functionally, catalyzes the attachment of glutamate to tRNA(Glu) in a two-step reaction: glutamate is first activated by ATP to form Glu-AMP and then transferred to the acceptor end of tRNA(Glu). The sequence is that of Glutamate--tRNA ligase from Vesicomyosocius okutanii subsp. Calyptogena okutanii (strain HA).